Consider the following 179-residue polypeptide: Large ribosomal subunit protein uL6 (179 aa).

This sequence belongs to the universal ribosomal protein uL6 family. As to quaternary structure, part of the 50S ribosomal subunit.

Its function is as follows. This protein binds to the 23S rRNA, and is important in its secondary structure. It is located near the subunit interface in the base of the L7/L12 stalk, and near the tRNA binding site of the peptidyltransferase center. This chain is Large ribosomal subunit protein uL6, found in Syntrophobacter fumaroxidans (strain DSM 10017 / MPOB).